A 404-amino-acid polypeptide reads, in one-letter code: RNA exonuclease 3 (404 aa).

Residues 1–17 (MNNNAQNKRSLDDSNGN) are compositionally biased toward polar residues. Positions 1–29 (MNNNAQNKRSLDDSNGNDTKRPKQEDPKY) are disordered. Over residues 18–28 (DTKRPKQEDPK) the composition is skewed to basic and acidic residues. The region spanning 241–389 (VLGIDCEMGF…EDSIAAIDIV (149 aa)) is the Exonuclease domain.

This sequence belongs to the REXO1/REXO3 family.

It is found in the cytoplasm. It localises to the nucleus. Functionally, 3' to 5' exoribonuclease required for proper 3' end maturation of MRP RNA and of the U5L snRNA. This Candida albicans (strain SC5314 / ATCC MYA-2876) (Yeast) protein is RNA exonuclease 3 (REX3).